The sequence spans 325 residues: MTADNGHDNNRHQYTAHVPVLLDEVLHYLSPVRGGRYLDGTLGLGGHSEAIMNRCGGDAWLLGLDRDREALAAASGRLAPFGDRVTTRYACYSQFAAIMDEIGWTGLDGALIDIGVSSMQIDTPSRGFSFYADGPLDMRMDPSGDMPSAGVLVNTGSVERLKEIISTYGEDPMAGRIARAIVDARARNPIETTARLAEVVESAYPAKWRAKSRNHPATRTFQALRMAVNGELEELETFLAAIVDRMNPGGRIVVITFHSLEDRLVKNAFRDEAKGCLCPRHIPVCVCGKKPRVNVLTRKPVTAGQAELQANSRASSAKLRAAERI.

Residues 45-47 (GGH), D65, Y92, D113, and Q120 each bind S-adenosyl-L-methionine.

Belongs to the methyltransferase superfamily. RsmH family.

It is found in the cytoplasm. It carries out the reaction cytidine(1402) in 16S rRNA + S-adenosyl-L-methionine = N(4)-methylcytidine(1402) in 16S rRNA + S-adenosyl-L-homocysteine + H(+). Its function is as follows. Specifically methylates the N4 position of cytidine in position 1402 (C1402) of 16S rRNA. This Oleidesulfovibrio alaskensis (strain ATCC BAA-1058 / DSM 17464 / G20) (Desulfovibrio alaskensis) protein is Ribosomal RNA small subunit methyltransferase H.